Consider the following 404-residue polypeptide: Argininosuccinate synthase (404 aa).

Residues 10–18 (AYSGGVDTS) and alanine 38 contribute to the ATP site. Tyrosine 89 is an L-citrulline binding site. Glycine 119 lines the ATP pocket. L-aspartate is bound by residues threonine 121, asparagine 125, and aspartate 126. Asparagine 125 lines the L-citrulline pocket. Residues arginine 129, serine 177, serine 186, glutamate 262, and tyrosine 274 each contribute to the L-citrulline site.

The protein belongs to the argininosuccinate synthase family. Type 1 subfamily. In terms of assembly, homotetramer.

The protein localises to the cytoplasm. It catalyses the reaction L-citrulline + L-aspartate + ATP = 2-(N(omega)-L-arginino)succinate + AMP + diphosphate + H(+). Its pathway is amino-acid biosynthesis; L-arginine biosynthesis; L-arginine from L-ornithine and carbamoyl phosphate: step 2/3. In Prochlorococcus marinus (strain MIT 9215), this protein is Argininosuccinate synthase.